Reading from the N-terminus, the 239-residue chain is Fatty acid metabolism regulator protein (239 aa).

Residues 6-74 (KGPASFAEKY…HGKPTQVNNF (69 aa)) enclose the HTH gntR-type domain. Positions 34–53 (ERELSELIGVTRTTLREVLQ) form a DNA-binding region, H-T-H motif.

Homodimer.

The protein resides in the cytoplasm. Multifunctional regulator of fatty acid metabolism. In Shewanella denitrificans (strain OS217 / ATCC BAA-1090 / DSM 15013), this protein is Fatty acid metabolism regulator protein.